Reading from the N-terminus, the 365-residue chain is 1-aminocyclopropane-1-carboxylate oxidase homolog 9 (365 aa).

Residues 214 to 313 enclose the Fe2OG dioxygenase domain; that stretch reads KGLLMLCHYY…RISVACFVSS (100 aa). The Fe cation site is built by His238, Asp240, and His294. Position 304 (Arg304) interacts with 2-oxoglutarate.

This sequence belongs to the iron/ascorbate-dependent oxidoreductase family. The cofactor is Fe(2+).

The polypeptide is 1-aminocyclopropane-1-carboxylate oxidase homolog 9 (Arabidopsis thaliana (Mouse-ear cress)).